Reading from the N-terminus, the 313-residue chain is Probable cell division protein WhiA (313 aa).

The segment at residues 275-308 (SLRELGELAQPPLSKSCVNHRLRKLEQIAEHILA) is a DNA-binding region (H-T-H motif).

Belongs to the WhiA family.

Involved in cell division and chromosome segregation. The protein is Probable cell division protein WhiA of Desulforudis audaxviator (strain MP104C).